A 702-amino-acid polypeptide reads, in one-letter code: Ribosomal RNA large subunit methyltransferase K/L (702 aa).

Residues 43–154 form the THUMP domain; that stretch reads LVYQSLMWSR…KETASIALDL (112 aa).

Belongs to the methyltransferase superfamily. RlmKL family.

It is found in the cytoplasm. The catalysed reaction is guanosine(2445) in 23S rRNA + S-adenosyl-L-methionine = N(2)-methylguanosine(2445) in 23S rRNA + S-adenosyl-L-homocysteine + H(+). The enzyme catalyses guanosine(2069) in 23S rRNA + S-adenosyl-L-methionine = N(2)-methylguanosine(2069) in 23S rRNA + S-adenosyl-L-homocysteine + H(+). Specifically methylates the guanine in position 2445 (m2G2445) and the guanine in position 2069 (m7G2069) of 23S rRNA. In Shigella sonnei (strain Ss046), this protein is Ribosomal RNA large subunit methyltransferase K/L.